Here is a 341-residue protein sequence, read N- to C-terminus: Phenylalanine--tRNA ligase alpha subunit (341 aa).

E253 serves as a coordination point for Mg(2+).

It belongs to the class-II aminoacyl-tRNA synthetase family. Phe-tRNA synthetase alpha subunit type 1 subfamily. In terms of assembly, tetramer of two alpha and two beta subunits. Requires Mg(2+) as cofactor.

Its subcellular location is the cytoplasm. It catalyses the reaction tRNA(Phe) + L-phenylalanine + ATP = L-phenylalanyl-tRNA(Phe) + AMP + diphosphate + H(+). This is Phenylalanine--tRNA ligase alpha subunit from Methylococcus capsulatus (strain ATCC 33009 / NCIMB 11132 / Bath).